The sequence spans 254 residues: Mantle protein (254 aa).

The signal sequence occupies residues 1-16 (MLAVLLFAALVATAYS).

In terms of tissue distribution, prismatic layer of shell (at protein level). Expressed primarily in the mantle with highest level in the outer epithelium of the mantle edge and lower level in the mantle pallium.

The protein resides in the secreted. This chain is Mantle protein, found in Margaritifera margaritifera (Freshwater pearl mussel).